We begin with the raw amino-acid sequence, 158 residues long: Phosphopantetheine adenylyltransferase (158 aa).

Residue threonine 9 coordinates substrate. ATP contacts are provided by residues 9–10 (TF) and histidine 17. Substrate is bound by residues lysine 41, leucine 73, and arginine 87. Residues 88-90 (GVR), glutamate 98, and 123-129 (WSYVSST) each bind ATP.

The protein belongs to the bacterial CoaD family. Homohexamer. The cofactor is Mg(2+).

It is found in the cytoplasm. The catalysed reaction is (R)-4'-phosphopantetheine + ATP + H(+) = 3'-dephospho-CoA + diphosphate. Its pathway is cofactor biosynthesis; coenzyme A biosynthesis; CoA from (R)-pantothenate: step 4/5. Reversibly transfers an adenylyl group from ATP to 4'-phosphopantetheine, yielding dephospho-CoA (dPCoA) and pyrophosphate. In Histophilus somni (strain 129Pt) (Haemophilus somnus), this protein is Phosphopantetheine adenylyltransferase.